The sequence spans 145 residues: Basic phospholipase A2 cPt10 (145 aa).

Positions Met1–Ala21 are cleaved as a signal peptide. Residues Ile22–Leu27 constitute a propeptide that is removed on maturation. 7 disulfides stabilise this stretch: Cys38-Cys98, Cys54-Cys144, Cys56-Cys72, Cys71-Cys125, Cys78-Cys118, Cys87-Cys111, and Cys105-Cys116. 3 residues coordinate Ca(2+): Tyr55, Gly57, and Gly59. His75 is a catalytic residue. Residue Asp76 participates in Ca(2+) binding. Asp119 is a catalytic residue.

The protein belongs to the phospholipase A2 family. Group I subfamily. D49 sub-subfamily. Ca(2+) serves as cofactor. In terms of tissue distribution, expressed by the venom gland.

Its subcellular location is the secreted. It carries out the reaction a 1,2-diacyl-sn-glycero-3-phosphocholine + H2O = a 1-acyl-sn-glycero-3-phosphocholine + a fatty acid + H(+). PLA2 catalyzes the calcium-dependent hydrolysis of the 2-acyl groups in 3-sn-phosphoglycerides. The polypeptide is Basic phospholipase A2 cPt10 (Laticauda semifasciata (Black-banded sea krait)).